Reading from the N-terminus, the 111-residue chain is SPbeta prophage-derived uncharacterized protein YolC (111 aa).

Residues 1–25 (MKKRLIGFLVLVPALIMSGITLIEA) form the signal peptide.

This is SPbeta prophage-derived uncharacterized protein YolC (yolC) from Bacillus subtilis (strain 168).